A 293-amino-acid chain; its full sequence is Elongation factor Ts (293 aa).

The segment at 80-83 (TDFV) is involved in Mg(2+) ion dislocation from EF-Tu.

This sequence belongs to the EF-Ts family.

It localises to the cytoplasm. Its function is as follows. Associates with the EF-Tu.GDP complex and induces the exchange of GDP to GTP. It remains bound to the aminoacyl-tRNA.EF-Tu.GTP complex up to the GTP hydrolysis stage on the ribosome. The sequence is that of Elongation factor Ts from Burkholderia thailandensis (strain ATCC 700388 / DSM 13276 / CCUG 48851 / CIP 106301 / E264).